A 406-amino-acid chain; its full sequence is Arginine decarboxylase (406 aa).

Lys-8 carries the N6-(pyridoxal phosphate)lysine modification. Residue 192 to 202 (VDFGGGLGIDY) participates in substrate binding.

This sequence belongs to the Orn/Lys/Arg decarboxylase class-II family. SpeA subfamily. It depends on pyridoxal 5'-phosphate as a cofactor. Mg(2+) is required as a cofactor.

The enzyme catalyses L-arginine + H(+) = agmatine + CO2. The protein operates within amine and polyamine biosynthesis; agmatine biosynthesis; agmatine from L-arginine: step 1/1. This Theobroma cacao (Cacao) protein is Arginine decarboxylase (SPE2).